Reading from the N-terminus, the 238-residue chain is Zinc finger protein ZAT6 (238 aa).

A compositionally biased stretch (polar residues) spans 1-15; it reads MALETLTSPRLSSPM. The interval 1–42 is disordered; that stretch reads MALETLTSPRLSSPMPTLFQDSALGFHGSKGKRSKRSRSEFD. The Nuclear localization signal motif lies at 30–38; sequence KGKRSKRSR. 2 C2H2-type zinc fingers span residues 89–111 and 148–170; these read YKCS…KASH and HVCS…KRCH. The segment at 175 to 202 is disordered; the sequence is NGGGVSSSVSNSEDVGSTSHVSSGHRGF. The segment covering 180–193 has biased composition (low complexity); that stretch reads SSSVSNSEDVGSTS.

Its subcellular location is the nucleus. Functionally, probable transcription factor that regulates root development and phosphate (Pi) acquisition and homeostasis. Probably acts as a repressor of primary root growth and regulates Pi homeostasis through the control of root architecture. The sequence is that of Zinc finger protein ZAT6 (ZAT6) from Arabidopsis thaliana (Mouse-ear cress).